A 548-amino-acid polypeptide reads, in one-letter code: MAKEIKYDMKARELMLAGVNALADAVAVTHGPKGRNVVIDKAWGAPTVTKDGVTVAKEIELENKFENMGAQMVKEVASKTSDTAGDGTTTATVLARAIYEEGMKLVVAGNNPMAIKRGIDKACEAAVKSLMNLSKPTKEQREIAQVGTISANTDETIGNIIAEAMNKVGKEGVITVEEAKSMDTTLDVVEGMQFDRGYISPYFVTDSEKMVCSLEDPYILIHEKKISNMKDLLPLLEQTAKMGKPLLIVAEDVEGEALATLVVNRLRGTLQIAAVKAPGFGDRRKAMLEDIAILTGGTVVSEDMGIKLENMSLADLGKCKRVSIDKDNTTIVDGAGARSALEGRVKQIRAQIDDTTSDYDREKLQERLAKLIGGVAVINVGAATEVEMKEKKARVEDALNATRAAVEEGIVPGGGVALVRAIDAVAKAKITGEQKIGARVVMRALEAPLRMIANNAGMEGSVVLDKVKNTEGSFGYNADTDTYEDLIEAGVIDPTKVVRLALQNACSIAGLMLTTEAMIADKPDENAGGMPAMPGGGMGGMGGMGGMM.

Residues 29 to 32 (THGP), Lys-50, 86 to 90 (DGTTT), Gly-414, and Asp-493 each bind ATP.

The protein belongs to the chaperonin (HSP60) family. As to quaternary structure, forms a cylinder of 14 subunits composed of two heptameric rings stacked back-to-back. Interacts with the co-chaperonin GroES.

It localises to the cytoplasm. It catalyses the reaction ATP + H2O + a folded polypeptide = ADP + phosphate + an unfolded polypeptide.. Its function is as follows. Together with its co-chaperonin GroES, plays an essential role in assisting protein folding. The GroEL-GroES system forms a nano-cage that allows encapsulation of the non-native substrate proteins and provides a physical environment optimized to promote and accelerate protein folding. The polypeptide is Chaperonin GroEL (Desulfatibacillum aliphaticivorans).